We begin with the raw amino-acid sequence, 491 residues long: uncharacterized protein (491 aa).

A run of 12 helical transmembrane segments spans residues 48 to 68 (LILV…VAPC), 85 to 105 (ALIL…SAPL), 112 to 132 (RMLL…CGLA), 140 to 160 (IFRF…SGTI), 174 to 194 (AVMS…SGFI), 202 to 222 (WIFW…LPLL), 277 to 297 (PIVI…YLVL), 317 to 337 (LNYI…GIFI), 358 to 378 (VPVI…YGWT), 383 to 403 (THWI…MLGW), 408 to 428 (TYLI…ACCV), and 455 to 475 (LLAF…WFGG).

The protein belongs to the major facilitator superfamily.

The protein localises to the membrane. This is an uncharacterized protein from Schizosaccharomyces pombe (strain 972 / ATCC 24843) (Fission yeast).